We begin with the raw amino-acid sequence, 202 residues long: 3-isopropylmalate dehydratase small subunit (202 aa).

This sequence belongs to the LeuD family. LeuD type 1 subfamily. Heterodimer of LeuC and LeuD.

It catalyses the reaction (2R,3S)-3-isopropylmalate = (2S)-2-isopropylmalate. The protein operates within amino-acid biosynthesis; L-leucine biosynthesis; L-leucine from 3-methyl-2-oxobutanoate: step 2/4. Its function is as follows. Catalyzes the isomerization between 2-isopropylmalate and 3-isopropylmalate, via the formation of 2-isopropylmaleate. The sequence is that of 3-isopropylmalate dehydratase small subunit from Nocardia farcinica (strain IFM 10152).